Here is a 496-residue protein sequence, read N- to C-terminus: ATP-dependent protease ATPase subunit HslU2 (496 aa).

A mitochondrion-targeting transit peptide spans Met-1 to Cys-10. ATP is bound by residues Val-51 and Gly-94–Glu-99. A compositionally biased stretch (low complexity) spans Gly-177 to Ser-191. A disordered region spans residues Gly-177–Asn-204. ATP contacts are provided by Asp-308, Glu-374, and Arg-446.

Belongs to the ClpX chaperone family. HslU subfamily. A double ring-shaped homohexamer of HslV is capped on each side by a ring-shaped HslU homohexamer. The assembly of the HslU/HslV complex (HslVU) is dependent on binding of ATP.

It is found in the mitochondrion matrix. The protein resides in the kinetoplast. In terms of biological role, ATPase subunit of a proteasome-like degradation complex; this subunit has chaperone activity. The binding of ATP and its subsequent hydrolysis by HslU are essential for unfolding of protein substrates subsequently hydrolyzed by HslV. HslU recognizes the N-terminal part of its protein substrates and unfolds these before they are guided to HslV for hydrolysis. The HslVU protease complex functions in mitochondrial DNA replication by regulating DNA helicase PIF2 protein levels. The polypeptide is ATP-dependent protease ATPase subunit HslU2 (HslU2) (Trypanosoma brucei brucei (strain 927/4 GUTat10.1)).